Consider the following 934-residue polypeptide: MSAHDLKLEEIVNAETLRRKLNELADTADESYTSLPMRKVVLQTLKDALASGRANAEDMLMKDGGGTLCAKRLCYLMDTLIDILFEFATTRAYPTRNPSKAENMALVAVGGYGRGGLAQGSDIDLLFLLPYKQTPWGEQVVEYTLYMLWDMGLKVGHSTRNIDECIRLAREDMTIRTALLDARFLTGDKDLFRTLEIRFEEEIVKGTEPEFIQAKLAERDARHRKAGETRYLVEPNVKEGKGGQRDLHTLFWITKYFYRVKTKEELVKLGVLSRAELKLFNKAEDFLWAVRCHMHFATLKAEERLSFDIQPEIAQRLGYTAHPGQNYVERFMKHYFLVAKDVGDLTRIICAALEEQQAKHVPGFNRIFLTFSRRKRKLSDDGAFISENHRINIARPDIFRQDPVNMIRLFHLADRHGLEFHPEAMQSLTRSLKLINADLRENPEANRLFLEILTSPRNPELILRRMNESGVLGKFIPDFGKIVAMMQFNMYHHYTVDEHLLRCIAVLSEIEHGELKTEHPLSNHLITTIKRDRNLLYVTLLLHDIAKGRPEDHSIAGARIARRLCPRFGLTPSETETVEWLVREHLTMSMVAQSRDLNDRKTIIDFADTVQTMERLKLLLILTVCDIKAVGPGIWNGWKGQLLRTLFYETELVLTGGFSELSRAARDKQAREALAERLSDWPKEERDAYLALPYTNYFLTVSLDDQVRHAHFIRDADQQGRALVTMAKPHAFEAVTEITVLAPDHPRLLSVITGACAAAGGNIVDAQIFTTSDGRALDTILISREFDTDDDERRRAERVGKVIEDVLSGKAHLPDMLAKRTKPKKAARAFKVEPRVEINNTLSNKFTVIEVEGLDRPGLLSELTGLISDLSLDIASAHITTFGEKVIDSFYVTDLVGHKISNATRQGNIKRKLLALLGAENGARTNGRSPQAAA.

The segment at 1 to 379 (MSAHDLKLEE…TFSRRKRKLS (379 aa)) is uridylyltransferase. The uridylyl-removing stretch occupies residues 380–736 (DDGAFISENH…AKPHAFEAVT (357 aa)). An HD domain is found at 496-613 (VDEHLLRCIA…IDFADTVQTM (118 aa)). 2 ACT domains span residues 737–818 (EITV…DMLA) and 848–931 (VIEV…RSPQ).

This sequence belongs to the GlnD family. Mg(2+) is required as a cofactor.

It carries out the reaction [protein-PII]-L-tyrosine + UTP = [protein-PII]-uridylyl-L-tyrosine + diphosphate. The catalysed reaction is [protein-PII]-uridylyl-L-tyrosine + H2O = [protein-PII]-L-tyrosine + UMP + H(+). With respect to regulation, uridylyltransferase (UTase) activity is inhibited by glutamine, while glutamine activates uridylyl-removing (UR) activity. Functionally, modifies, by uridylylation and deuridylylation, the PII regulatory proteins (GlnB and homologs), in response to the nitrogen status of the cell that GlnD senses through the glutamine level. Under low glutamine levels, catalyzes the conversion of the PII proteins and UTP to PII-UMP and PPi, while under higher glutamine levels, GlnD hydrolyzes PII-UMP to PII and UMP (deuridylylation). Thus, controls uridylylation state and activity of the PII proteins, and plays an important role in the regulation of nitrogen assimilation and metabolism. The chain is Bifunctional uridylyltransferase/uridylyl-removing enzyme from Brucella abortus (strain S19).